A 171-amino-acid chain; its full sequence is Glutathione peroxidase-like peroxiredoxin GPX3 (171 aa).

Cys43 serves as the catalytic Cysteine sulfenic acid (-SOH) intermediate. The cysteines at positions 43 and 89 are disulfide-linked.

This sequence belongs to the glutathione peroxidase family. Interacts with CAP1 and probably YBP1.

The catalysed reaction is a hydroperoxide + [thioredoxin]-dithiol = an alcohol + [thioredoxin]-disulfide + H2O. Involved in oxidative stress response and redox homeostasis. Functions as a sensor and transducer of hydroperoxide stress. In response to hydroperoxide stress it oxidizes (activates) the transcription activator CAP1, which is involved in transcription activation of genes of the oxidative stress response pathway. May also play a direct role in hydroperoxide scavenging. The enzyme is not required for the glutaredoxin-mediated antioxidant function. In the presence of peroxides, GPX3 is directly oxidized at Cys-43 to form a cysteine sulfenic acid (-SOH). Cys-43-SOH then forms either an intramolecular disulfide bond (Cys-43 with Cys-89) or a transient, intermolecular disulfide bond with 'Cys-446' of CAP1, which is further resolved into a CAP1 intramolecular disulfide bond ('Cys-303' with 'Cys-598'), which causes its nuclear accumulation and activation, and a reduced Cys-43 in GPX3. Required for C.albicans-mediated macrophage killing. This is Glutathione peroxidase-like peroxiredoxin GPX3 from Candida albicans (strain SC5314 / ATCC MYA-2876) (Yeast).